A 333-amino-acid chain; its full sequence is Phenylalanine--tRNA ligase alpha subunit (333 aa).

Mg(2+) is bound at residue Glu248.

The protein belongs to the class-II aminoacyl-tRNA synthetase family. Phe-tRNA synthetase alpha subunit type 1 subfamily. In terms of assembly, tetramer of two alpha and two beta subunits. It depends on Mg(2+) as a cofactor.

Its subcellular location is the cytoplasm. The enzyme catalyses tRNA(Phe) + L-phenylalanine + ATP = L-phenylalanyl-tRNA(Phe) + AMP + diphosphate + H(+). The sequence is that of Phenylalanine--tRNA ligase alpha subunit from Ureaplasma urealyticum serovar 10 (strain ATCC 33699 / Western).